A 126-amino-acid chain; its full sequence is UPF0292 protein TSIB_0423 (126 aa).

Residues 20–100 (NGVILVEGMR…RVDTNTRREL (81 aa)) enclose the Toprim domain. Mg(2+) contacts are provided by Glu26, Asp69, and Asp71.

The protein belongs to the UPF0292 family. It depends on Mg(2+) as a cofactor.

The protein is UPF0292 protein TSIB_0423 of Thermococcus sibiricus (strain DSM 12597 / MM 739).